Here is a 216-residue protein sequence, read N- to C-terminus: Small ribosomal subunit protein uS3 (216 aa).

A KH type-2 domain is found at 38–106 (IRGYLKKKLY…EIIINILEVR (69 aa)).

It belongs to the universal ribosomal protein uS3 family. In terms of assembly, part of the 30S ribosomal subunit. Forms a tight complex with proteins S10 and S14.

Functionally, binds the lower part of the 30S subunit head. Binds mRNA in the 70S ribosome, positioning it for translation. This chain is Small ribosomal subunit protein uS3, found in Syntrophus aciditrophicus (strain SB).